Here is a 115-residue protein sequence, read N- to C-terminus: Ribonuclease P protein component (115 aa).

The protein belongs to the RnpA family. As to quaternary structure, consists of a catalytic RNA component (M1 or rnpB) and a protein subunit.

The enzyme catalyses Endonucleolytic cleavage of RNA, removing 5'-extranucleotides from tRNA precursor.. Functionally, RNaseP catalyzes the removal of the 5'-leader sequence from pre-tRNA to produce the mature 5'-terminus. It can also cleave other RNA substrates such as 4.5S RNA. The protein component plays an auxiliary but essential role in vivo by binding to the 5'-leader sequence and broadening the substrate specificity of the ribozyme. In Bacillus cereus (strain AH187), this protein is Ribonuclease P protein component.